The following is a 145-amino-acid chain: Putative pre-16S rRNA nuclease (145 aa).

The protein belongs to the YqgF nuclease family.

The protein resides in the cytoplasm. Functionally, could be a nuclease involved in processing of the 5'-end of pre-16S rRNA. In Levilactobacillus brevis (strain ATCC 367 / BCRC 12310 / CIP 105137 / JCM 1170 / LMG 11437 / NCIMB 947 / NCTC 947) (Lactobacillus brevis), this protein is Putative pre-16S rRNA nuclease.